We begin with the raw amino-acid sequence, 529 residues long: MTLKWTSVLLLIHLSCYFSSGSCGKVLVWAAEYSHWMNMKTILKELVQRGHEVTVLASSASILFDPNDASTLKFEVYPTSLTKTEFENIIMQQVKRWSDIRKDSFWLYFSQEQEILWELYDIFRNFCKDVVSNKKVMKKLQESRFDIVFADAVFPCGELLAALLNIRFVYSLRFTPGYTIERHSGGLIFPPSYIPIVMSKLSDQMTFMERVKNMIYVLYFDFWFQMSDMKKWDQFYSEVLGRPTTLFETMGKADIWLMRNSWSFQFPHPFLPNVDFVGGFHCKPAKPLPKEMEEFVQSSGENGVVVFSLGSVISNMTAERANVIATALAKIPQKVLWRFDGNKPDALGLNTRLYKWIPQNDLLGHPKTRAFITHGGANGIYEAIYHGIPMVGIPLFFDQPDNIAHMKAKGAAVRLDFNTMSSTDLLNALKTVINDPLYKENIMKLSRIQHDQPVKPLDRAVFWIEFVMPHKGAKHLRVAAHDLTWFQYHSLDVIGFLLACVATVIFIITKFCLFCFWKFARKGKKGKRD.

Residues 1 to 21 form the signal peptide; that stretch reads MTLKWTSVLLLIHLSCYFSSG. Lysine 135 bears the N6-succinyllysine mark. An N-linked (GlcNAc...) asparagine glycan is attached at asparagine 315. Residues 493–513 form a helical membrane-spanning segment; the sequence is VIGFLLACVATVIFIITKFCL.

Belongs to the UDP-glycosyltransferase family. In terms of tissue distribution, widely expressed.

Its subcellular location is the microsome membrane. The protein localises to the endoplasmic reticulum membrane. It carries out the reaction glucuronate acceptor + UDP-alpha-D-glucuronate = acceptor beta-D-glucuronoside + UDP + H(+). Its function is as follows. UDPGT is of major importance in the conjugation and subsequent elimination of potentially toxic xenobiotics and endogenous compounds. This Homo sapiens (Human) protein is UDP-glucuronosyltransferase 2B11 (UGT2B11).